The primary structure comprises 494 residues: Ribose import ATP-binding protein RbsA (494 aa).

2 consecutive ABC transporter domains span residues 2–239 (IDMR…VGRQ) and 251–493 (IGEE…TGGN). 34–41 (GENGAGKS) is an ATP binding site.

The protein belongs to the ABC transporter superfamily. Ribose importer (TC 3.A.1.2.1) family. The complex is composed of an ATP-binding protein (RbsA), two transmembrane proteins (RbsC) and a solute-binding protein (RbsB).

The protein localises to the cell membrane. It catalyses the reaction D-ribose(out) + ATP + H2O = D-ribose(in) + ADP + phosphate + H(+). Part of the ABC transporter complex RbsABC involved in ribose import. Responsible for energy coupling to the transport system. The chain is Ribose import ATP-binding protein RbsA from Geobacillus kaustophilus (strain HTA426).